Reading from the N-terminus, the 316-residue chain is Retinol dehydrogenase 12 (316 aa).

46 to 52 is an NADP(+) binding site; the sequence is GANTGIG. A substrate-binding site is contributed by serine 175. Tyrosine 200 (proton acceptor) is an active-site residue.

The protein belongs to the short-chain dehydrogenases/reductases (SDR) family. Expressed in the retina.

The catalysed reaction is all-trans-retinol + NADP(+) = all-trans-retinal + NADPH + H(+). It carries out the reaction 11-cis-retinol + NADP(+) = 11-cis-retinal + NADPH + H(+). The enzyme catalyses 9-cis-retinol + NADP(+) = 9-cis-retinal + NADPH + H(+). It catalyses the reaction a 4-hydroxynonen-1-ol + NADP(+) = a 4-hydroxynonenal + NADPH + H(+). The catalysed reaction is (E)-non-2-en-1-ol + NADP(+) = (E)-non-2-enal + NADPH + H(+). It carries out the reaction (Z)-non-6-en-1-ol + NADP(+) = (Z)-non-6-enal + NADPH + H(+). The enzyme catalyses nonan-1-ol + NADP(+) = nonanal + NADPH + H(+). It participates in cofactor metabolism; retinol metabolism. Functionally, retinoids dehydrogenase/reductase with a clear preference for NADP. Displays high activity towards 9-cis, 11-cis and all-trans-retinal. Shows very weak activity towards 13-cis-retinol. Also exhibits activity, albeit with lower affinity than for retinaldehydes, towards lipid peroxidation products (C9 aldehydes) such as 4-hydroxynonenal and trans-2-nonenal. May play an important function in photoreceptor cells to detoxify 4-hydroxynonenal and potentially other toxic aldehyde products resulting from lipid peroxidation. Has no dehydrogenase activity towards steroids. This Bos taurus (Bovine) protein is Retinol dehydrogenase 12 (RDH12).